Consider the following 107-residue polypeptide: Conantokin-R (107 aa).

An N-terminal signal peptide occupies residues 1-24 (MQLYTYLYLLVSLVTFYLILGTGT). The propeptide occupies 25 to 80 (LGHGGALTERRSTDATALKPEPVLLQKSSARSTDDNGNDRLTQMKRILKKRGNKAR). A disordered region spans residues 26–64 (GHGGALTERRSTDATALKPEPVLLQKSSARSTDDNGNDR). A 4-carboxyglutamate mark is found at Glu-83, Glu-84, Glu-91, and Glu-95. The a divalent metal cation site is built by Glu-91 and Glu-95. Cys-101 and Cys-105 are oxidised to a cystine.

Belongs to the conotoxin B superfamily. Ca(2+) is required as a cofactor. Mg(2+) serves as cofactor. As to expression, expressed by the venom duct.

The protein localises to the secreted. Functionally, conantokins inhibit N-methyl-D-aspartate (NMDA) receptors. This toxin is potent in the following order of preference: NR2B approximately NR2A/GRIN2A &gt; NR2C/GRIN2C &gt;&gt; NR2D/GRIN2D. Induces sleep-like symptoms in young mice. Is a highly potent anticonvulsant compound. This Conus radiatus (Rayed cone) protein is Conantokin-R.